We begin with the raw amino-acid sequence, 315 residues long: Ribosomal RNA small subunit methyltransferase H (315 aa).

Residues 35–37, aspartate 55, phenylalanine 80, aspartate 102, and glutamine 109 contribute to the S-adenosyl-L-methionine site; that span reads GGH.

It belongs to the methyltransferase superfamily. RsmH family.

Its subcellular location is the cytoplasm. It carries out the reaction cytidine(1402) in 16S rRNA + S-adenosyl-L-methionine = N(4)-methylcytidine(1402) in 16S rRNA + S-adenosyl-L-homocysteine + H(+). In terms of biological role, specifically methylates the N4 position of cytidine in position 1402 (C1402) of 16S rRNA. This Buchnera aphidicola subsp. Baizongia pistaciae (strain Bp) protein is Ribosomal RNA small subunit methyltransferase H.